Consider the following 46-residue polypeptide: Light-harvesting protein B-800/850 beta 1 chain (46 aa).

At 2-19 the chain is on the cytoplasmic side; it reads AERSLSGLTEEEAIAVHD. Histidine 18 and histidine 36 together coordinate a bacteriochlorophyll. A helical transmembrane segment spans residues 20 to 42; that stretch reads QFKTTFSAFIILAAVAHVLVWVW. Over 43-46 the chain is Periplasmic; that stretch reads KPWF.

The protein belongs to the antenna complex beta subunit family. As to quaternary structure, the core complex is formed by different alpha and beta chains, binding bacteriochlorophyll molecules, and arranged most probably in tetrameric structures disposed around the reaction center.

It localises to the cell inner membrane. In terms of biological role, antenna complexes are light-harvesting systems, which transfer the excitation energy to the reaction centers. In Magnetospirillum molischianum (Rhodospirillum molischianum), this protein is Light-harvesting protein B-800/850 beta 1 chain (B1).